The following is a 163-amino-acid chain: Crossover junction endodeoxyribonuclease RuvC (163 aa).

Residues aspartate 7, glutamate 67, and aspartate 140 contribute to the active site. Aspartate 7, glutamate 67, and aspartate 140 together coordinate Mg(2+).

Belongs to the RuvC family. In terms of assembly, homodimer which binds Holliday junction (HJ) DNA. The HJ becomes 2-fold symmetrical on binding to RuvC with unstacked arms; it has a different conformation from HJ DNA in complex with RuvA. In the full resolvosome a probable DNA-RuvA(4)-RuvB(12)-RuvC(2) complex forms which resolves the HJ. Requires Mg(2+) as cofactor.

It is found in the cytoplasm. The catalysed reaction is Endonucleolytic cleavage at a junction such as a reciprocal single-stranded crossover between two homologous DNA duplexes (Holliday junction).. In terms of biological role, the RuvA-RuvB-RuvC complex processes Holliday junction (HJ) DNA during genetic recombination and DNA repair. Endonuclease that resolves HJ intermediates. Cleaves cruciform DNA by making single-stranded nicks across the HJ at symmetrical positions within the homologous arms, yielding a 5'-phosphate and a 3'-hydroxyl group; requires a central core of homology in the junction. The consensus cleavage sequence is 5'-(A/T)TT(C/G)-3'. Cleavage occurs on the 3'-side of the TT dinucleotide at the point of strand exchange. HJ branch migration catalyzed by RuvA-RuvB allows RuvC to scan DNA until it finds its consensus sequence, where it cleaves and resolves the cruciform DNA. The polypeptide is Crossover junction endodeoxyribonuclease RuvC (Desulforamulus reducens (strain ATCC BAA-1160 / DSM 100696 / MI-1) (Desulfotomaculum reducens)).